Here is a 780-residue protein sequence, read N- to C-terminus: B3 domain-containing transcription repressor VAL2 (780 aa).

Positions 286–387 (FEKVLSASDA…KLVMGYRKAT (102 aa)) form a DNA-binding region, TF-B3. The CW-type zinc finger occupies 515 to 565 (TGEQEQWVQCDACGKWRQLPVDILLPPKWSCSDNLLDPGRSSCSAPDELSP). Zn(2+) contacts are provided by Cys-524, Cys-527, Cys-545, and Cys-557. Disordered regions lie at residues 577 to 608 (EFKR…AGIT), 669 to 695 (KRNK…TEVE), and 743 to 780 (NTAG…DPVN). Residues 584–603 (ASSNEKLNQSQDASALNSLG) are compositionally biased toward polar residues. Positions 674–686 (EAGQASQQAQSQS) are enriched in low complexity. A compositionally biased stretch (polar residues) spans 743–765 (NTAGEQQSSDMVSTEHGSSSAAQ).

It localises to the nucleus. In terms of biological role, transcriptional repressor of gene expression involved in embryonic pathways, such as LEC1, ABI3, and FUS3. Repressor of the sugar-inducible genes involved in the seed maturation program in seedlings. Plays an essential role in regulating the transition from seed maturation to seedling growth. Functionally redundant with VAL1/HSI2. This is B3 domain-containing transcription repressor VAL2 (VAL2) from Arabidopsis thaliana (Mouse-ear cress).